A 242-amino-acid chain; its full sequence is Venom nerve growth factor 2 (242 aa).

Residues 1-18 (MSMLCYTLIIAFLIGIWA) form the signal peptide. The propeptide occupies 19–125 (APQSEDNVPL…ALNRNIQAKR (107 aa)). Residues 47-66 (DLKTSRNTDQRHPAPKKADD) show a composition bias toward basic and acidic residues. The interval 47–70 (DLKTSRNTDQRHPAPKKADDQELG) is disordered. 3 disulfide bridges follow: C139–C203, C181–C231, and C191–C233.

Belongs to the NGF-beta family. Homodimer; non-covalently linked. Expressed by the venom gland.

Its subcellular location is the secreted. In terms of biological role, nerve growth factor is important for the development and maintenance of the sympathetic and sensory nervous systems. It stimulates division and differentiation of sympathetic and embryonic sensory neurons as well as basal forebrain cholinergic neurons in the brain. Its relevance in the snake venom is not clear. However, it has been shown to inhibit metalloproteinase-dependent proteolysis of platelet glycoprotein Ib alpha, suggesting a metalloproteinase inhibition to prevent metalloprotease autodigestion and/or protection against prey proteases. Binds a lipid between the two protein chains in the homodimer. The lipid-bound form promotes histamine relase from mouse mast cells, contrary to the lipid-free form. This is Venom nerve growth factor 2 from Pseudechis australis (Mulga snake).